The primary structure comprises 389 residues: Putative F-box/kelch-repeat protein At4g35120 (389 aa).

The region spanning 24 to 70 (SMSISSLPDEIVLSFLALISKSYYRSLSLVSKSFYSLLSSTEIYAAR) is the F-box domain. Kelch repeat units lie at residues 128–174 (EIYK…FLDG), 176–225 (IYVI…AVSG), and 227–273 (RLYV…MKPI).

The polypeptide is Putative F-box/kelch-repeat protein At4g35120 (Arabidopsis thaliana (Mouse-ear cress)).